We begin with the raw amino-acid sequence, 656 residues long: NADH-ubiquinone oxidoreductase chain 5 (656 aa).

Transmembrane regions (helical) follow at residues 4-21, 28-50, 81-103, 112-129, 133-155, 176-198, 208-230, 243-262, 272-294, 301-319, 329-351, 364-386, 409-431, 452-471, 514-536, 603-625, and 629-651; these read TLII…FFGR, AHLI…FFEV, LTVS…SISY, RFFS…ILVT, YLIM…NFWF, TLLT…STVF, IITI…VGLH, VSAL…LLMR, TVLV…IGLF, VIAY…AVGL, LVNH…HAVA, EFLP…VPFM, IVYF…VLYL, LFMT…FGYL, FVFT…KLLI, SLGN…GLIF, and LLYF…FALL.

Belongs to the complex I subunit 5 family.

Its subcellular location is the mitochondrion inner membrane. It catalyses the reaction a ubiquinone + NADH + 5 H(+)(in) = a ubiquinol + NAD(+) + 4 H(+)(out). In terms of biological role, core subunit of the mitochondrial membrane respiratory chain NADH dehydrogenase (Complex I) that is believed to belong to the minimal assembly required for catalysis. Complex I functions in the transfer of electrons from NADH to the respiratory chain. The immediate electron acceptor for the enzyme is believed to be ubiquinone. This chain is NADH-ubiquinone oxidoreductase chain 5 (nad5), found in Aspergillus niger.